The chain runs to 288 residues: Transformer-2 protein homolog beta (288 aa).

Disordered regions lie at residues 1–114 (MSDS…RANP) and 196–225 (TKRP…YDRG). At serine 2 the chain carries N-acetylserine. A phosphoserine mark is found at serine 2, serine 4, and serine 14. Over residues 17-28 (ASRSGSAHGSGK) the composition is skewed to low complexity. Serine 29 carries the phosphoserine modification. Threonine 33 is modified (phosphothreonine). Basic residues predominate over residues 59-109 (RSRRSSRRHYTRSRSRSRSHRRSRSRSYSRDYRRRHSHSHSPMSTRRRHVG). Phosphoserine is present on residues serine 83, serine 85, serine 87, serine 95, serine 97, and serine 99. Threonine 103 bears the Phosphothreonine mark. The 79-residue stretch at 118–196 (CCLGVFGLSL…RRIRVDFSIT (79 aa)) folds into the RRM domain. The linker stretch occupies residues 193–230 (FSITKRPHTPTPGIYMGRPTYGSSRRRDYYDRGYDRGY). Residue lysine 197 forms a Glycyl lysine isopeptide (Lys-Gly) (interchain with G-Cter in SUMO2) linkage. A phosphothreonine mark is found at threonine 201 and threonine 203. Phosphoserine is present on residues serine 215 and serine 237. Position 241 is an asymmetric dimethylarginine; alternate (arginine 241). The residue at position 241 (arginine 241) is a Dimethylated arginine; alternate. Arginine 241 is modified (omega-N-methylarginine; alternate). Positions 242–288 (GGGGGGGGWRAAQDRDQIYRRRSPSPYYSRGGYRSRSRSRSYSPRRY) are disordered. Residues 274 to 288 (YRSRSRSRSYSPRRY) show a composition bias toward basic residues.

This sequence belongs to the splicing factor SR family. In terms of assembly, found in a pre-mRNA exonic splicing enhancer (ESE) complex with TRA2B/SFRS10, SNRNP70, SNRPA1 and SRRM1. Binds to A3 enhancer proteins SFRS4, SFRS5, SFRS6 and SFRS9. Interacts with CPSF6, RBMY1A1, RBMX, RNPS1 and phosphorylated SFRS13A. Interacts with SAFB/SAFB1. Interacts with ILDR1 (via C-terminus) and ILDR2. Phosphorylated in the RS domains.

It is found in the nucleus. Functionally, sequence-specific RNA-binding protein which participates in the control of pre-mRNA splicing. Can either activate or suppress exon inclusion. Acts additively with RBMX to promote exon 7 inclusion of the survival motor neuron SMN2. Activates the splicing of MAPT/Tau exon 10. Alters pre-mRNA splicing patterns by antagonizing the effects of splicing regulators, like RBMX. Binds to the AG-rich SE2 domain in the SMN exon 7 RNA. Binds to pre-mRNA. In Bos taurus (Bovine), this protein is Transformer-2 protein homolog beta (TRA2B).